The sequence spans 78 residues: MSRVCQVTGKKPMVGNNRSHAKNATRRRFLPNLQNHRFWLEGEKRFVKLRISTKGMRIIDKKGIEVVVAELRARGEKV.

The segment at 1–21 (MSRVCQVTGKKPMVGNNRSHA) is disordered.

Belongs to the bacterial ribosomal protein bL28 family.

The polypeptide is Large ribosomal subunit protein bL28 (Shewanella woodyi (strain ATCC 51908 / MS32)).